We begin with the raw amino-acid sequence, 488 residues long: Glutamyl-tRNA(Gln) amidotransferase subunit A (488 aa).

Residues K77 and S152 each act as charge relay system in the active site. The active-site Acyl-ester intermediate is the S176.

It belongs to the amidase family. GatA subfamily. As to quaternary structure, heterotrimer of A, B and C subunits.

The catalysed reaction is L-glutamyl-tRNA(Gln) + L-glutamine + ATP + H2O = L-glutaminyl-tRNA(Gln) + L-glutamate + ADP + phosphate + H(+). Functionally, allows the formation of correctly charged Gln-tRNA(Gln) through the transamidation of misacylated Glu-tRNA(Gln) in organisms which lack glutaminyl-tRNA synthetase. The reaction takes place in the presence of glutamine and ATP through an activated gamma-phospho-Glu-tRNA(Gln). The chain is Glutamyl-tRNA(Gln) amidotransferase subunit A from Streptococcus sanguinis (strain SK36).